A 178-amino-acid polypeptide reads, in one-letter code: Putative metal-dependent hydrolase GTNG_0529 (178 aa).

Residues histidine 68, histidine 161, and histidine 165 each coordinate Zn(2+).

Belongs to the metal hydrolase YfiT family. In terms of assembly, homodimer. Requires Zn(2+) as cofactor.

It localises to the cytoplasm. Possible metal-dependent hydrolase. The polypeptide is Putative metal-dependent hydrolase GTNG_0529 (Geobacillus thermodenitrificans (strain NG80-2)).